A 641-amino-acid chain; its full sequence is Tetracycline resistance protein TetQ (641 aa).

A tr-type G domain is found at 1–244; that stretch reads MNIINLGILA…AITSFILPPA (244 aa). Residues 10-17, 74-78, and 128-131 each bind GTP; these read AHIDAGKT, DTPGH, and NKID.

Belongs to the TRAFAC class translation factor GTPase superfamily. Classic translation factor GTPase family. TetM/TetO subfamily.

Abolishes the inhibitory effect of tetracyclin on protein synthesis by a non-covalent modification of the ribosomes. The protein is Tetracycline resistance protein TetQ (tetQ) of Bacteroides thetaiotaomicron.